The sequence spans 385 residues: ATP phosphoribosyltransferase regulatory subunit (385 aa).

Belongs to the class-II aminoacyl-tRNA synthetase family. HisZ subfamily. As to quaternary structure, heteromultimer composed of HisG and HisZ subunits.

It is found in the cytoplasm. Its pathway is amino-acid biosynthesis; L-histidine biosynthesis; L-histidine from 5-phospho-alpha-D-ribose 1-diphosphate: step 1/9. Required for the first step of histidine biosynthesis. May allow the feedback regulation of ATP phosphoribosyltransferase activity by histidine. The protein is ATP phosphoribosyltransferase regulatory subunit of Bordetella parapertussis (strain 12822 / ATCC BAA-587 / NCTC 13253).